The primary structure comprises 104 residues: Large ribosomal subunit protein uL24 (104 aa).

Belongs to the universal ribosomal protein uL24 family. In terms of assembly, part of the 50S ribosomal subunit.

In terms of biological role, one of two assembly initiator proteins, it binds directly to the 5'-end of the 23S rRNA, where it nucleates assembly of the 50S subunit. One of the proteins that surrounds the polypeptide exit tunnel on the outside of the subunit. The protein is Large ribosomal subunit protein uL24 of Baumannia cicadellinicola subsp. Homalodisca coagulata.